We begin with the raw amino-acid sequence, 439 residues long: 3-phosphoshikimate 1-carboxyvinyltransferase (439 aa).

Residues lysine 27, serine 28, and arginine 32 each contribute to the 3-phosphoshikimate site. A phosphoenolpyruvate-binding site is contributed by lysine 27. Phosphoenolpyruvate is bound by residues glycine 101 and arginine 130. 3-phosphoshikimate contacts are provided by serine 175, glutamine 177, aspartate 326, and lysine 353. Residue glutamine 177 participates in phosphoenolpyruvate binding. Aspartate 326 serves as the catalytic Proton acceptor. Phosphoenolpyruvate is bound by residues arginine 357 and arginine 399.

It belongs to the EPSP synthase family. In terms of assembly, monomer.

It localises to the cytoplasm. It carries out the reaction 3-phosphoshikimate + phosphoenolpyruvate = 5-O-(1-carboxyvinyl)-3-phosphoshikimate + phosphate. It functions in the pathway metabolic intermediate biosynthesis; chorismate biosynthesis; chorismate from D-erythrose 4-phosphate and phosphoenolpyruvate: step 6/7. Catalyzes the transfer of the enolpyruvyl moiety of phosphoenolpyruvate (PEP) to the 5-hydroxyl of shikimate-3-phosphate (S3P) to produce enolpyruvyl shikimate-3-phosphate and inorganic phosphate. This chain is 3-phosphoshikimate 1-carboxyvinyltransferase, found in Synechococcus sp. (strain CC9311).